A 30-amino-acid polypeptide reads, in one-letter code: 2S seed storage-like protein (30 aa).

Belongs to the 2S seed storage albumins family. As to quaternary structure, the mature protein is a heterodimer of a small and a large chain linked by 2 disulfide bonds. As to expression, extracted from castor bean.

Functionally, this is a 2S seed storage protein. Inhibits spore germination in R.solani and F.oxysporum. Exhibits anti-trypsin activity. The chain is 2S seed storage-like protein from Ricinus communis (Castor bean).